The following is a 59-amino-acid chain: Potassium channel toxin alpha-KTx 16.2 (59 aa).

The N-terminal stretch at 1–22 (MKIFSILLVALIICSISICTEA) is a signal peptide. 3 cysteine pairs are disulfide-bonded: C30/C51, C36/C56, and C40/C58.

The protein belongs to the short scorpion toxin superfamily. Potassium channel inhibitor family. Alpha-KTx 16 subfamily. In terms of tissue distribution, expressed by the venom gland.

It localises to the secreted. In terms of biological role, alpha-KTx 16.2: inhibits large conductance calcium-activated potassium channels (KCa1.1/Slo-beta4 KCNMA1/KCNMB4). It appears to block channel activity by a simple bimolecular inhibition process. Shows a fast association rate and a slow dissociation rate of binding on rat brain synaptosome. Significantly inhibits voltage-dependent sodium current and voltage-dependent delayed rectifier potassium currents. Functionally, significantly inhibits voltage-dependent sodium current (Nav) and voltage-dependent delayed rectifier potassium current. The protein is Potassium channel toxin alpha-KTx 16.2 of Olivierus martensii (Manchurian scorpion).